Here is a 59-residue protein sequence, read N- to C-terminus: Large ribosomal subunit protein uL30 (59 aa).

It belongs to the universal ribosomal protein uL30 family. Part of the 50S ribosomal subunit.

This chain is Large ribosomal subunit protein uL30, found in Brachyspira hyodysenteriae (strain ATCC 49526 / WA1).